A 596-amino-acid chain; its full sequence is Elongation factor 4 (596 aa).

The 182-residue stretch at 2–183 (KNIRNFSIIA…AIVRRVPAPD (182 aa)) folds into the tr-type G domain. GTP-binding positions include 14-19 (DHGKST) and 130-133 (NKID).

Belongs to the TRAFAC class translation factor GTPase superfamily. Classic translation factor GTPase family. LepA subfamily.

The protein resides in the cell inner membrane. It catalyses the reaction GTP + H2O = GDP + phosphate + H(+). Required for accurate and efficient protein synthesis under certain stress conditions. May act as a fidelity factor of the translation reaction, by catalyzing a one-codon backward translocation of tRNAs on improperly translocated ribosomes. Back-translocation proceeds from a post-translocation (POST) complex to a pre-translocation (PRE) complex, thus giving elongation factor G a second chance to translocate the tRNAs correctly. Binds to ribosomes in a GTP-dependent manner. This is Elongation factor 4 from Campylobacter curvus (strain 525.92).